The following is a 163-amino-acid chain: Probable calcium-binding protein CML26 (163 aa).

Ala2 carries the post-translational modification N-acetylalanine. EF-hand domains lie at 16-51 (STDMELKKVFDKFDANGDGKISVSELGNVFKSMGTS), 52-82 (YTEEELNRVLDEIDIDCDGFINQEEFATICR), 85-120 (SSAVEIREAFDLYDQNKNGLISSSEIHKVLNRLGMT), and 121-156 (CSVEDCVRMIGHVDTDGDGNVNFEEFQKMMSSPELV). Positions 29, 31, 33, 35, 40, 65, 67, 69, 76, 98, 100, 102, 109, 134, 136, 138, 140, and 145 each coordinate Ca(2+).

Potential calcium sensor. The chain is Probable calcium-binding protein CML26 (CML26) from Arabidopsis thaliana (Mouse-ear cress).